Here is a 316-residue protein sequence, read N- to C-terminus: MSDASLRSTSTMERLVARGTFPVLVRTSACRSLFGPVDHEELSRELQARLAELNAEDQNRWDYDFQQDMPLRGPGRLQWTEVDSDSVPAFYRETVQVGRCRLLLAPRPVAVAVAVSPPLEPAAESLDGLEEAPEQLPSVPVPAPASTPPPVPVLAPAPAPAPAPVAAPVAAPVAVAVLAPAPAPAPAPAPAPAPVAAPAPAPAPAPAPAPAPAPAPDAAPQESAEQGANQGQRGQEPLADQLHSGISGRPAAGTAAASANGAAIKKLSGPLISDFFAKRKRSAPEKSSGDVPAPCPSPSAAPGVGSVEQTPRKRLR.

The residue at position 107 (arginine 107) is an Omega-N-methylarginine. Positions 124 to 153 (ESLDGLEEAPEQLPSVPVPAPASTPPPVPV) are disordered. Positions 139-153 (VPVPAPASTPPPVPV) are enriched in pro residues. 9 repeat units span residues 156-159 (PAPA), 160-163 (PAPA), 180-183 (PAPA), 184-187 (PAPA), 188-191 (PAPA), 198-201 (PAPA), 202-205 (PAPA), 206-209 (PAPA), and 210-213 (PAPA). Positions 156-213 (PAPAPAPAPVAAPVAAPVAVAVLAPAPAPAPAPAPAPAPVAAPAPAPAPAPAPAPAPA) are 9 X 4 AA repeats of P-A-P-A. A compositionally biased stretch (pro residues) spans 181-217 (APAPAPAPAPAPAPVAAPAPAPAPAPAPAPAPAPAPD). Residues 181–260 (APAPAPAPAP…AAGTAAASAN (80 aa)) are disordered. Polar residues predominate over residues 223-233 (SAEQGANQGQR). The span at 251 to 260 (AAGTAAASAN) shows a compositional bias: low complexity. Serine 268 bears the Phosphoserine mark. A Nuclear localization signal motif is present at residues 278–281 (KRKR). Residues 278–316 (KRKRSAPEKSSGDVPAPCPSPSAAPGVGSVEQTPRKRLR) form a disordered region.

This sequence belongs to the CDI family. Interacts with PCNA. Expressed in the heart, brain, lung, skeletal muscle, kidney, pancreas and testis. Expressed in the eye. High levels are seen in the placenta while low levels are seen in the liver.

It is found in the nucleus. Functionally, potent tight-binding inhibitor of several G1 cyclin/CDK complexes (cyclin E-CDK2, cyclin D2-CDK4, and cyclin A-CDK2) and, to lesser extent, of the mitotic cyclin B-CDC2. Negative regulator of cell proliferation. May play a role in maintenance of the non-proliferative state throughout life. This is Cyclin-dependent kinase inhibitor 1C (CDKN1C) from Homo sapiens (Human).